The following is a 159-amino-acid chain: 2-C-methyl-D-erythritol 2,4-cyclodiphosphate synthase (159 aa).

A divalent metal cation is bound by residues Asp10 and His12. 4-CDP-2-C-methyl-D-erythritol 2-phosphate is bound by residues 10–12 (DVH) and 36–37 (HS). His44 lines the a divalent metal cation pocket. 4-CDP-2-C-methyl-D-erythritol 2-phosphate is bound by residues 58–60 (DIG), 134–137 (TTTE), Phe141, and Arg144.

It belongs to the IspF family. As to quaternary structure, homotrimer. Requires a divalent metal cation as cofactor.

The enzyme catalyses 4-CDP-2-C-methyl-D-erythritol 2-phosphate = 2-C-methyl-D-erythritol 2,4-cyclic diphosphate + CMP. Its pathway is isoprenoid biosynthesis; isopentenyl diphosphate biosynthesis via DXP pathway; isopentenyl diphosphate from 1-deoxy-D-xylulose 5-phosphate: step 4/6. In terms of biological role, involved in the biosynthesis of isopentenyl diphosphate (IPP) and dimethylallyl diphosphate (DMAPP), two major building blocks of isoprenoid compounds. Catalyzes the conversion of 4-diphosphocytidyl-2-C-methyl-D-erythritol 2-phosphate (CDP-ME2P) to 2-C-methyl-D-erythritol 2,4-cyclodiphosphate (ME-CPP) with a corresponding release of cytidine 5-monophosphate (CMP). The protein is 2-C-methyl-D-erythritol 2,4-cyclodiphosphate synthase of Bacteroides fragilis (strain YCH46).